A 59-amino-acid chain; its full sequence is MDVKRVKQILSSSSRIDVTYEGVPVWIESCDEQSGVAQVYDVSNPGESVHVNVTALEEK.

Belongs to the SspH family.

It localises to the spore core. The chain is Small, acid-soluble spore protein H from Bacillus thuringiensis subsp. konkukian (strain 97-27).